Reading from the N-terminus, the 70-residue chain is Cold shock protein CspV (70 aa).

Positions G7–V67 constitute a CSD domain.

It is found in the cytoplasm. This is Cold shock protein CspV (cspV) from Vibrio cholerae serotype O1 (strain ATCC 39315 / El Tor Inaba N16961).